Reading from the N-terminus, the 45-residue chain is Large ribosomal subunit protein bL34 (45 aa).

The protein belongs to the bacterial ribosomal protein bL34 family.

In Arthrobacter sp. (strain FB24), this protein is Large ribosomal subunit protein bL34.